The chain runs to 466 residues: Methylenetetrahydrofolate--tRNA-(uracil-5-)-methyltransferase TrmFO (466 aa).

14–19 (GGGLAG) lines the FAD pocket.

Belongs to the MnmG family. TrmFO subfamily. FAD serves as cofactor.

Its subcellular location is the cytoplasm. The enzyme catalyses uridine(54) in tRNA + (6R)-5,10-methylene-5,6,7,8-tetrahydrofolate + NADH + H(+) = 5-methyluridine(54) in tRNA + (6S)-5,6,7,8-tetrahydrofolate + NAD(+). It catalyses the reaction uridine(54) in tRNA + (6R)-5,10-methylene-5,6,7,8-tetrahydrofolate + NADPH + H(+) = 5-methyluridine(54) in tRNA + (6S)-5,6,7,8-tetrahydrofolate + NADP(+). In terms of biological role, catalyzes the folate-dependent formation of 5-methyl-uridine at position 54 (M-5-U54) in all tRNAs. The chain is Methylenetetrahydrofolate--tRNA-(uracil-5-)-methyltransferase TrmFO from Brucella suis (strain ATCC 23445 / NCTC 10510).